We begin with the raw amino-acid sequence, 841 residues long: 27S pre-rRNA (guanosine(2922)-2'-O)-methyltransferase (841 aa).

S-adenosyl-L-methionine is bound by residues glycine 58, tryptophan 60, aspartate 78, aspartate 94, and aspartate 119. Lysine 159 acts as the Proton acceptor in catalysis. Residues 360 to 389 (QEKQRLNVKRERRRKNEMKQKELQRMQMNM) are a coiled coil. Phosphoserine occurs at positions 455 and 464. 2 disordered regions span residues 480-534 (RDAK…DDEA) and 565-654 (NNVE…HSRD). Over residues 505 to 517 (SLEKKEEEGKDYI) the composition is skewed to basic and acidic residues. Acidic residues predominate over residues 518 to 534 (EDNDDEGVEGDSDDDEA). Serine 529 is modified (phosphoserine). Positions 574-585 (NTVNDGIMSSES) are enriched in polar residues. Residues 598-607 (HEEMHQKQDE) are compositionally biased toward basic and acidic residues. Acidic residues-rich tracts occupy residues 608 to 621 (ADSSDESSSDDSDF) and 629 to 641 (ASEEFDSDYDSEE). Positions 642 to 654 (EKNQTKKEKHSRD) are enriched in basic and acidic residues.

It belongs to the class I-like SAM-binding methyltransferase superfamily. RNA methyltransferase RlmE family. SPB1 subfamily. In terms of assembly, component of the nucleolar and nucleoplasmic pre-60S ribosomal particle. Interacts with the snoRNA-associated proteins NOP1 and NOP58.

Its subcellular location is the nucleus. The protein localises to the nucleolus. It catalyses the reaction guanosine(2922) in 27S pre-rRNA + S-adenosyl-L-methionine = 2'-O-methylguanosine(2922) in 27S pre-rRNA + S-adenosyl-L-homocysteine + H(+). In terms of biological role, required for proper assembly of pre-ribosomal particles during the biogenesis of the 60S ribosomal subunit. Specifically methylates the guanosine in position 2922 of the 25S rRNA at the stage of 27S pre-rRNA maturation. Also methylates the uridine in position 2921 in the absence of methylation of this residue guided by snoRNA snR52 at the stage of 35S pre-rRNA maturation. The chain is 27S pre-rRNA (guanosine(2922)-2'-O)-methyltransferase from Saccharomyces cerevisiae (strain ATCC 204508 / S288c) (Baker's yeast).